We begin with the raw amino-acid sequence, 303 residues long: Ferrochelatase (303 aa).

His-185 and Glu-262 together coordinate Fe cation.

It belongs to the ferrochelatase family.

The protein localises to the cytoplasm. It carries out the reaction heme b + 2 H(+) = protoporphyrin IX + Fe(2+). It participates in porphyrin-containing compound metabolism; protoheme biosynthesis; protoheme from protoporphyrin-IX: step 1/1. Catalyzes the ferrous insertion into protoporphyrin IX. In Campylobacter jejuni subsp. jejuni serotype O:2 (strain ATCC 700819 / NCTC 11168), this protein is Ferrochelatase.